A 247-amino-acid polypeptide reads, in one-letter code: uncharacterized protein (247 aa).

Positions 19, 38, 63, and 64 each coordinate NAD(+). Substrate is bound at residue S142. Positions 155, 159, and 190 each coordinate NAD(+). Y155 functions as the Proton acceptor in the catalytic mechanism.

Belongs to the short-chain dehydrogenases/reductases (SDR) family.

This is an uncharacterized protein from Mycobacterium bovis (strain ATCC BAA-935 / AF2122/97).